We begin with the raw amino-acid sequence, 425 residues long: SWI/SNF and RSC complexes subunit ssr3 (425 aa).

Residues 1 to 16 (MSNNSRLPENGVQSGN) are compositionally biased toward polar residues. Positions 1 to 23 (MSNNSRLPENGVQSGNGEDAELK) are disordered. Positions 201 to 278 (EHPERYKLSK…PELMNRFLEP (78 aa)) constitute an SWIB/MDM2 domain.

It belongs to the SMARCD family. As to quaternary structure, component of the RSC complex composed of at least arp9, arp42, rsc1, rsc4, rsc7, rsc9, rsc58, sfh1, snf21, ssr1, ssr2, ssr3 and ssr4. The complex interacts with histone and histone variant components of centromeric chromatin. Component of the SWI/SNF global transcription activator complex composed of at least arp9, arp42, snf5, snf22, snf30, sbf59, sol1, ssr1, ssr2, ssr3, ssr4 and tfg3.

The protein resides in the cytoplasm. It is found in the nucleus. Functionally, component of the chromatin structure remodeling complex (RSC), which is involved in transcription regulation and nucleosome positioning. Controls particularly membrane and organelle development genes. Part of the SWI/SNF complex, an ATP-dependent chromatin remodeling complex, required for the positive and negative regulation of gene expression of a large number of genes. It changes chromatin structure by altering DNA-histone contacts within a nucleosome, leading eventually to a change in nucleosome position, thus facilitating or repressing binding of gene-specific transcription factors. The protein is SWI/SNF and RSC complexes subunit ssr3 (ssr3) of Schizosaccharomyces pombe (strain 972 / ATCC 24843) (Fission yeast).